A 293-amino-acid chain; its full sequence is DOMON domain-containing protein FRRS1L (293 aa).

An N-terminal signal peptide occupies residues 1 to 28 (MAGQPLRRPAWVPLLLRLLLAGIAACDA). The disordered stretch occupies residues 29–60 (SPADDSAGPGGRGPRGRARGDAGADEAVPRHD). Residues 46–60 (ARGDAGADEAVPRHD) show a composition bias toward basic and acidic residues. In terms of domain architecture, DOMON spans 119–234 (CDYFLSYRMI…WYYLFAWGPA (116 aa)). The chain crosses the membrane as a helical span at residues 271-291 (TFSSPFCLLLIVALTFYLLMG).

As to quaternary structure, component of the outer core of AMPAR complex. AMPAR complex consists of an inner core made of 4 pore-forming GluA/GRIA proteins (GRIA1, GRIA2, GRIA3 and GRIA4) and 4 major auxiliary subunits arranged in a twofold symmetry. One of the two pairs of distinct binding sites is occupied either by CNIH2, CNIH3 or CACNG2, CACNG3. The other harbors CACNG2, CACNG3, CACNG4, CACNG8 or GSG1L. This inner core of AMPAR complex is complemented by outer core constituents binding directly to the GluA/GRIA proteins at sites distinct from the interaction sites of the inner core constituents. Outer core constituents include at least PRRT1, PRRT2, CKAMP44/SHISA9, FRRS1L and NRN1. The proteins of the inner and outer core serve as a platform for other, more peripherally associated AMPAR constituents. Alone or in combination, these auxiliary subunits control the gating and pharmacology of the AMPAR complex and profoundly impact their biogenesis and protein processing. As to expression, expressed in the brain (at protein level). In embryos expression is evident in the ventral forebrain, but a lower level is seen in the remainder of the embryos. In the adult brain, expressed in the cortex, cerebellum, hippocampus and basal ganglia.

The protein resides in the cell membrane. Its subcellular location is the synapse. In terms of biological role, important modulator of glutamate signaling pathway. The sequence is that of DOMON domain-containing protein FRRS1L (Frrs1l) from Mus musculus (Mouse).